Reading from the N-terminus, the 490-residue chain is Velvet complex subunit 2 (490 aa).

2 disordered regions span residues 23–148 (LYHH…ESQQ) and 295–316 (YQTQ…TYGP). Residues 54–70 (PPSHHFQLHPGHGHHQQ) are compositionally biased toward basic residues. Positions 112–131 (AAEHRDHPQHALDEPSRSHD) are enriched in basic and acidic residues. The 311-residue stretch at 164-474 (ATGRRYHLDV…AAQGIKIPIR (311 aa)) folds into the Velvet domain. Over residues 295-313 (YQTQPTYSQGSSAYPSNGT) the composition is skewed to polar residues.

Belongs to the velvet family. VelB subfamily. In terms of assembly, component of the heterotrimeric velvet complex composed of LAE1, VEL1 and VEL2; VEL1 acting as a bridging protein between LAE1 and VEL2. Forms a heterodimeric complex with VOS1; the formation of the VEL2-VOS1 complex is light-dependent.

Its subcellular location is the nucleus. It localises to the cytoplasm. In terms of biological role, component of the velvet transcription factor complex that controls sexual/asexual developmental ratio in response to light, promoting sexual development in the darkness while stimulating asexual sporulation under illumination. The velvet complex acts as a global regulator for secondary metabolite gene expression. Component of the VEL2-VOS1 heterodimeric complex that plays a dual role in activating genes associated with spore maturation and repressing certain development-associated genes. The VEL2-VOS1 complex binds DNA through the DNA-binding domain of VOS1 that recognizes an 11-nucleotide consensus sequence 5'-CTGGCCGCGGC-3' consisting of two motifs in the promoters of key developmental regulatory genes. Regulates expression of cellulase-encoding genes such as the cellobiohydrolase-encoding genes cbh1 and cbh2, the endo-beta-1,4-glucanase-encoding genes egl1 and egl2, and the beta-glucosidase-encoding gene bgl1. The chain is Velvet complex subunit 2 from Hypocrea jecorina (strain QM6a) (Trichoderma reesei).